A 315-amino-acid chain; its full sequence is Ribosomal RNA small subunit methyltransferase H (315 aa).

S-adenosyl-L-methionine contacts are provided by residues 37–39 (AGH), Asp57, Tyr84, Asp105, and Gln112.

It belongs to the methyltransferase superfamily. RsmH family.

It localises to the cytoplasm. It carries out the reaction cytidine(1402) in 16S rRNA + S-adenosyl-L-methionine = N(4)-methylcytidine(1402) in 16S rRNA + S-adenosyl-L-homocysteine + H(+). Functionally, specifically methylates the N4 position of cytidine in position 1402 (C1402) of 16S rRNA. The protein is Ribosomal RNA small subunit methyltransferase H of Lachnospira eligens (strain ATCC 27750 / DSM 3376 / VPI C15-48 / C15-B4) (Eubacterium eligens).